Reading from the N-terminus, the 255-residue chain is Acetylglutamate kinase (255 aa).

Substrate contacts are provided by residues 40–41 (GG), arginine 62, and asparagine 153.

This sequence belongs to the acetylglutamate kinase family. ArgB subfamily.

It localises to the cytoplasm. The catalysed reaction is N-acetyl-L-glutamate + ATP = N-acetyl-L-glutamyl 5-phosphate + ADP. It functions in the pathway amino-acid biosynthesis; L-arginine biosynthesis; N(2)-acetyl-L-ornithine from L-glutamate: step 2/4. Functionally, catalyzes the ATP-dependent phosphorylation of N-acetyl-L-glutamate. The sequence is that of Acetylglutamate kinase from Bacillus cereus (strain AH820).